A 293-amino-acid chain; its full sequence is Glycine N-methyltransferase (293 aa).

N-acetylvaline is present on Val2. 2 residues coordinate (6S)-5-methyl-5,6,7,8-tetrahydrofolate: Ser4 and Tyr6. At Ser10 the chain carries Phosphoserine. Tyr22, Trp31, Tyr34, and Arg41 together coordinate S-adenosyl-L-methionine. At Tyr34 the chain carries Phosphotyrosine. Lys46 bears the N6-succinyllysine mark. Residues Ala65, Asp86–Ser88, Asn117–Trp118, Leu137, Leu137–Ser140, and Arg176 each bind S-adenosyl-L-methionine. N6-succinyllysine occurs at positions 191, 196, and 201. His215 lines the (6S)-5-methyl-5,6,7,8-tetrahydrofolate pocket. Tyr221 provides a ligand contact to S-adenosyl-L-methionine. Residue Arg240 coordinates (6S)-5-methyl-5,6,7,8-tetrahydrofolate.

Belongs to the class I-like SAM-binding methyltransferase superfamily. Glycine N-methyltransferase family. Homotetramer.

Its subcellular location is the cytoplasm. The catalysed reaction is glycine + S-adenosyl-L-methionine = sarcosine + S-adenosyl-L-homocysteine + H(+). Inhibited by 5-methyltetrahydrofolate monoglutamate and by 5-methyltetrahydrofolate pentaglutamate, inhibition is much more effective by the pentaglutamate form than by the monoglutamate form. Two molecules of 5-methyltetrahydrofolate are bound per tetramer. The binding sites are localized between subunits. Inhibitor binding may preclude movements of the polypeptide chain that are necessary for enzyme activity. In terms of biological role, catalyzes the methylation of glycine by using S-adenosylmethionine (AdoMet) to form N-methylglycine (sarcosine) with the concomitant production of S-adenosylhomocysteine (AdoHcy), a reaction regulated by the binding of 5-methyltetrahydrofolate. Plays an important role in the regulation of methyl group metabolism by regulating the ratio between S-adenosyl-L-methionine and S-adenosyl-L-homocysteine. The protein is Glycine N-methyltransferase (Gnmt) of Mus musculus (Mouse).